Consider the following 228-residue polypeptide: 2-C-methyl-D-erythritol 4-phosphate cytidylyltransferase (228 aa).

Belongs to the IspD/TarI cytidylyltransferase family. IspD subfamily.

It catalyses the reaction 2-C-methyl-D-erythritol 4-phosphate + CTP + H(+) = 4-CDP-2-C-methyl-D-erythritol + diphosphate. It functions in the pathway isoprenoid biosynthesis; isopentenyl diphosphate biosynthesis via DXP pathway; isopentenyl diphosphate from 1-deoxy-D-xylulose 5-phosphate: step 2/6. Functionally, catalyzes the formation of 4-diphosphocytidyl-2-C-methyl-D-erythritol from CTP and 2-C-methyl-D-erythritol 4-phosphate (MEP). The sequence is that of 2-C-methyl-D-erythritol 4-phosphate cytidylyltransferase from Crocosphaera subtropica (strain ATCC 51142 / BH68) (Cyanothece sp. (strain ATCC 51142)).